Reading from the N-terminus, the 348-residue chain is NADH-ubiquinone oxidoreductase chain 2 (348 aa).

Helical transmembrane passes span 1–21 (MNPYVLMILMSSLGLGTTLTF), 25–45 (HWILAWMGLEINTLAIVPLMA), 60–80 (FLIQAAAAAMILFTSTTNAWI), 99–119 (MFALALKIGLAPMHFWLPEVL), 124–144 (LLTGLILSTWQKLAPMALIIQ), 151–171 (PLILTSLGIASSLIGGWSGLN), 178–197 (ILAYSSIAHMGWMIIVIQYA), 202–224 (LIALGTYIFMTSAAFLTLKVLSA), 239–259 (ILAAIATLVMLSLGGLPPLTG), 274–294 (DLPATATIMALTALLSLFFYL), and 326–346 (LTISVTVTMGLLPLTPAILML).

The protein belongs to the complex I subunit 2 family. As to quaternary structure, core subunit of respiratory chain NADH dehydrogenase (Complex I) which is composed of 45 different subunits.

It localises to the mitochondrion inner membrane. It carries out the reaction a ubiquinone + NADH + 5 H(+)(in) = a ubiquinol + NAD(+) + 4 H(+)(out). Core subunit of the mitochondrial membrane respiratory chain NADH dehydrogenase (Complex I) which catalyzes electron transfer from NADH through the respiratory chain, using ubiquinone as an electron acceptor. Essential for the catalytic activity and assembly of complex I. The protein is NADH-ubiquinone oxidoreductase chain 2 (mt-nd2) of Danio rerio (Zebrafish).